Here is a 108-residue protein sequence, read N- to C-terminus: Thiosulfate sulfurtransferase GlpE (108 aa).

In terms of domain architecture, Rhodanese spans 17–105; that stretch reads KDGSAALVDI…WARQYPQDVE (89 aa). Cys-65 functions as the Cysteine persulfide intermediate in the catalytic mechanism.

The protein belongs to the GlpE family.

It localises to the cytoplasm. It catalyses the reaction thiosulfate + hydrogen cyanide = thiocyanate + sulfite + 2 H(+). The enzyme catalyses thiosulfate + [thioredoxin]-dithiol = [thioredoxin]-disulfide + hydrogen sulfide + sulfite + 2 H(+). Transferase that catalyzes the transfer of sulfur from thiosulfate to thiophilic acceptors such as cyanide or dithiols. May function in a CysM-independent thiosulfate assimilation pathway by catalyzing the conversion of thiosulfate to sulfite, which can then be used for L-cysteine biosynthesis. This Serratia proteamaculans (strain 568) protein is Thiosulfate sulfurtransferase GlpE.